A 392-amino-acid chain; its full sequence is MPLSQKQIDQVRTKVHYSEVDTPFNKYLDILGKVTKLTGSIINGTLSNDDSKIEKLTEQNISQLKESAHLRFLDLQSSIDTKKVADENWETCQQETLAKLENLKDKLPDIKSIHSKLLLRIGKLQGLYDSVQVINREVEGLSEGRTSLVVTRAEWEKELGTDLVKFLIEKNYLKLVDPGLKKDSSEERYRIYDDFSKGPKELESINASMKSDIENVRQEVSSYKEKWLRDAEIFGKITSIFKEELLKRDGLLNEAEGDNIDEDYESDEDEERKERFKRQRSMVEVNTIENVDEKEESDHEYDDQEDEENEEEDDMEVDVEDIKEDNEVDGESSQQEDNSRQGNNEETDKETGVIEEPDAVNDAEEADSDHSSRKLGGTTSDFSASSSVEEVK.

Composition is skewed to acidic residues over residues 258–271 (DNID…EDEE) and 290–330 (NVDE…EVDG). The segment at 258 to 392 (DNIDEDYESD…SASSSVEEVK (135 aa)) is disordered. Serine 266 carries the post-translational modification Phosphoserine. The span at 331-344 (ESSQQEDNSRQGNN) shows a compositional bias: polar residues. Residues 345–367 (EETDKETGVIEEPDAVNDAEEAD) show a composition bias toward acidic residues. Residues 377–392 (GTTSDFSASSSVEEVK) are compositionally biased toward polar residues.

In terms of assembly, component of the THO complex, which is composed of HPR1, MFT1, THO2 and THP2. Together with SUB2, TEX1 and YRA1, THO forms the transcription/export (TREX) complex. THO associates with DNA and RNA in vitro.

It is found in the nucleus. Its function is as follows. Component the THO subcomplex of the TREX complex, which operates in coupling transcription elongation to mRNA export. The THO complex is recruited to transcribed genes and moves along the gene with the elongating polymerase during transcription. THO is important for stabilizing nascent RNA in the RNA polymerase II elongation complex by preventing formation of DNA:RNA hybrids behind the elongating polymerase. It functions in cotranscriptional formation of an export-competent messenger ribonucleoprotein particle (mRNP) by facilitating the loading of ATP-dependent RNA helicase SUB2 and the mRNA export factor YRA1 along the nascent mRNA. This is THO complex subunit MFT1 (MFT1) from Saccharomyces cerevisiae (strain ATCC 204508 / S288c) (Baker's yeast).